The primary structure comprises 357 residues: Cytosolic Fe-S cluster assembly factor NAR1 (357 aa).

Residues Cys14, Cys28, Cys31, Cys34, Cys129, Cys172, Cys297, and Cys301 each contribute to the [4Fe-4S] cluster site.

Belongs to the NARF family.

In terms of biological role, component of the cytosolic Fe/S protein assembly machinery. May play a role in the transfer of pre-assembled Fe/S clusters to target apoproteins. The polypeptide is Cytosolic Fe-S cluster assembly factor NAR1 (NAR1) (Encephalitozoon cuniculi (strain GB-M1) (Microsporidian parasite)).